Here is a 217-residue protein sequence, read N- to C-terminus: Secreted RxLR effector protein 147 (217 aa).

An N-terminal signal peptide occupies residues 1–23; that stretch reads MRGAFYVTTALLITNSIRTAAEA. A disordered region spans residues 22-52; sequence EANPPGRQPMSHHDGVVPGKSSPRRFLQGSH. The RxLR-dEER signature appears at 46 to 67; that stretch reads RFLQGSHEPHDKFAVSAANEER.

The protein belongs to the RxLR effector family.

Its subcellular location is the secreted. It is found in the host nucleus. The protein localises to the host cytoplasm. Secreted effector that completely suppresses the host cell death induced by cell death-inducing proteins. The protein is Secreted RxLR effector protein 147 of Plasmopara viticola (Downy mildew of grapevine).